The chain runs to 96 residues: MNVLKEVYSTIEKRIQEKPEGSYVVKITTDDKKTAVNKICEKVGEEAAEVILAAKDNNKAEIIYESADLIFHTMVLLAKSGITYEELSEEFKKRMK.

Belongs to the PRA-PH family.

Its subcellular location is the cytoplasm. The catalysed reaction is 1-(5-phospho-beta-D-ribosyl)-ATP + H2O = 1-(5-phospho-beta-D-ribosyl)-5'-AMP + diphosphate + H(+). It participates in amino-acid biosynthesis; L-histidine biosynthesis; L-histidine from 5-phospho-alpha-D-ribose 1-diphosphate: step 2/9. This Methanococcus maripaludis (strain C5 / ATCC BAA-1333) protein is Phosphoribosyl-ATP pyrophosphatase.